The primary structure comprises 420 residues: Multiple sugar-binding protein (420 aa).

An N-terminal signal peptide occupies residues 1–22; it reads MKWYKKIGLLGIVGLTSVLLAA. Cys-23 carries N-palmitoyl cysteine lipidation. Residue Cys-23 is the site of S-diacylglycerol cysteine attachment.

It belongs to the bacterial solute-binding protein 1 family.

The protein localises to the cell membrane. Functionally, involved in a binding protein-dependent transport system responsible for the uptake of melibiose, raffinose and isomaltotriose. This Streptococcus mutans serotype c (strain ATCC 700610 / UA159) protein is Multiple sugar-binding protein.